A 192-amino-acid chain; its full sequence is uncharacterized protein (192 aa).

Residues 29-160 (HRQAAVLIPI…PLDIYRRGDS (132 aa)) form the Nudix hydrolase domain. The Nudix box signature appears at 67 to 89 (GAVDDTDASVIAAALREAEEEVA). Residues E83 and E87 each contribute to the Mg(2+) site.

Belongs to the Nudix hydrolase family. PCD1 subfamily. Mn(2+) is required as a cofactor. Mg(2+) serves as cofactor.

In terms of biological role, probably mediates the hydrolysis of some nucleoside diphosphate derivatives. This is an uncharacterized protein from Shigella flexneri serotype 5b (strain 8401).